The sequence spans 123 residues: Glucose starvation-inducible protein B (123 aa).

2 stretches are compositionally biased toward basic and acidic residues: residues 1–29 (MADN…KEFY) and 41–109 (SKNH…KEFY). The segment at 1-123 (MADNNKMSRE…SKGGNARNND (123 aa)) is disordered. Tandem repeats lie at residues 13-32 (GRKG…YQEI), 33-52 (GQKG…YQEI), 53-72 (GEKG…YQEI), 73-92 (GEKG…YQEI), and 93-112 (GRKG…YQEI). A 5 X 20 AA approximate tandem repeats region spans residues 13–120 (GRKGGETTSK…EIGSKGGNAR (108 aa)).

Functionally, involved in an adaptive response to nutrient deprivation other than sporulation. This chain is Glucose starvation-inducible protein B (gsiB), found in Bacillus subtilis (strain 168).